A 194-amino-acid chain; its full sequence is ATP-dependent Clp protease proteolytic subunit (194 aa).

Ser-98 (nucleophile) is an active-site residue. Residue His-123 is part of the active site.

It belongs to the peptidase S14 family. As to quaternary structure, fourteen ClpP subunits assemble into 2 heptameric rings which stack back to back to give a disk-like structure with a central cavity, resembling the structure of eukaryotic proteasomes.

Its subcellular location is the cytoplasm. It carries out the reaction Hydrolysis of proteins to small peptides in the presence of ATP and magnesium. alpha-casein is the usual test substrate. In the absence of ATP, only oligopeptides shorter than five residues are hydrolyzed (such as succinyl-Leu-Tyr-|-NHMec, and Leu-Tyr-Leu-|-Tyr-Trp, in which cleavage of the -Tyr-|-Leu- and -Tyr-|-Trp bonds also occurs).. Functionally, cleaves peptides in various proteins in a process that requires ATP hydrolysis. Has a chymotrypsin-like activity. Plays a major role in the degradation of misfolded proteins. This is ATP-dependent Clp protease proteolytic subunit from Acetivibrio thermocellus (strain ATCC 27405 / DSM 1237 / JCM 9322 / NBRC 103400 / NCIMB 10682 / NRRL B-4536 / VPI 7372) (Clostridium thermocellum).